We begin with the raw amino-acid sequence, 766 residues long: Ent-copalyl diphosphate synthase 3 (766 aa).

The N-terminal 30 residues, F1 to P30, are a transit peptide targeting the chloroplast. K222 provides a ligand contact to substrate. Residues D354 and D356 each contribute to the Mg(2+) site. Residues D354–D357 carry the DXDD motif motif. K440 serves as a coordination point for substrate.

Belongs to the terpene synthase family. Tpsc subfamily. The cofactor is Mg(2+). As to expression, accumulates in leaves, and, at low levels, in germinating seeds.

Its subcellular location is the plastid. It localises to the chloroplast. It carries out the reaction (2E,6E,10E)-geranylgeranyl diphosphate = ent-copalyl diphosphate. It participates in plant hormone biosynthesis; gibberellin biosynthesis. The protein operates within secondary metabolite biosynthesis; terpenoid biosynthesis. In terms of biological role, involved in the biosynthesis of ent-kaurene diterpenoids natural products such as oridonin, miltiradiene, eriocalyxin B and nezukol, known to exhibit antitumor, anti-inflammatory and antibacterial activities, and in the production of gibberellins phytohormones. Catalyzes the conversion of (2E,6E,10E)-geranylgeranyl diphosphate (GGPP) to ent-copalyl diphosphate (ent-CPP). This Isodon eriocalyx (Plectranthus eriocalyx) protein is Ent-copalyl diphosphate synthase 3.